Here is an 83-residue protein sequence, read N- to C-terminus: Small ribosomal subunit protein bS21 (83 aa).

Residues 40 to 83 (TPMDERRRKARSASKRNKVKWRYSNKSEETASETAETPASAPEA) are disordered. The span at 47–62 (RKARSASKRNKVKWRY) shows a compositional bias: basic residues. Over residues 71-83 (SETAETPASAPEA) the composition is skewed to low complexity.

It belongs to the bacterial ribosomal protein bS21 family.

The chain is Small ribosomal subunit protein bS21 from Akkermansia muciniphila (strain ATCC BAA-835 / DSM 22959 / JCM 33894 / BCRC 81048 / CCUG 64013 / CIP 107961 / Muc).